A 305-amino-acid polypeptide reads, in one-letter code: Porphobilinogen deaminase (305 aa).

Cysteine 239 carries the S-(dipyrrolylmethanemethyl)cysteine modification.

Belongs to the HMBS family. In terms of assembly, monomer. The cofactor is dipyrromethane.

The enzyme catalyses 4 porphobilinogen + H2O = hydroxymethylbilane + 4 NH4(+). Its pathway is porphyrin-containing compound metabolism; protoporphyrin-IX biosynthesis; coproporphyrinogen-III from 5-aminolevulinate: step 2/4. In terms of biological role, tetrapolymerization of the monopyrrole PBG into the hydroxymethylbilane pre-uroporphyrinogen in several discrete steps. This is Porphobilinogen deaminase from Dichelobacter nodosus (strain VCS1703A).